A 252-amino-acid chain; its full sequence is 5-oxoprolinase subunit A (252 aa).

The protein belongs to the LamB/PxpA family. As to quaternary structure, forms a complex composed of PxpA, PxpB and PxpC.

It carries out the reaction 5-oxo-L-proline + ATP + 2 H2O = L-glutamate + ADP + phosphate + H(+). Catalyzes the cleavage of 5-oxoproline to form L-glutamate coupled to the hydrolysis of ATP to ADP and inorganic phosphate. The chain is 5-oxoprolinase subunit A from Corynebacterium glutamicum (strain ATCC 13032 / DSM 20300 / JCM 1318 / BCRC 11384 / CCUG 27702 / LMG 3730 / NBRC 12168 / NCIMB 10025 / NRRL B-2784 / 534).